Consider the following 230-residue polypeptide: 6-carboxyhexanoate--CoA ligase (230 aa).

The protein belongs to the BioW family. In terms of assembly, homodimer. Requires Mg(2+) as cofactor.

It carries out the reaction heptanedioate + ATP + CoA = 6-carboxyhexanoyl-CoA + AMP + diphosphate. The protein operates within metabolic intermediate metabolism; pimeloyl-CoA biosynthesis; pimeloyl-CoA from pimelate: step 1/1. In terms of biological role, catalyzes the transformation of pimelate into pimeloyl-CoA with concomitant hydrolysis of ATP to AMP. This chain is 6-carboxyhexanoate--CoA ligase, found in Staphylococcus aureus (strain Mu3 / ATCC 700698).